The sequence spans 601 residues: Glutathione-regulated potassium-efflux system protein KefB (601 aa).

A run of 13 helical transmembrane segments spans residues 5–25, 29–49, 55–75, 87–107, 115–135, 152–172, 180–202, 207–227, 230–250, 268–288, 291–311, 324–344, and 356–376; these read SLLMAGLLYLCAAVIAVPLAA, IGAVLGYLLAGIAIGPWGLGF, EILHFSELGVVFLMFIIGLEL, IFGVGAAQVLLSAAVLGGLLW, AAIIGGIGLAMSSTAMALQLM, VLLFQDLAVIPALALVPLLAG, WMKLGMKVLAFAGMLVGGRYLLR, FIAASGVREVFTAAALLLVLG, LFMEALGLSMALGTFIAGILL, GLLLGLFFISVGMALNLGVLY, ILEILAGVVMLVTVKTAVLYL, LQFSGVLSQGGEFAFVLFSAA, and PLLLVTVTLSMMTTPLLMQGV. The 120-residue stretch at 400–519 folds into the RCK N-terminal domain; the sequence is KPQVIVVGFG…AGVTQFSRET (120 aa).

It belongs to the monovalent cation:proton antiporter 2 (CPA2) transporter (TC 2.A.37) family. KefB subfamily. In terms of assembly, interacts with the regulatory subunit KefG.

It localises to the cell inner membrane. Functionally, pore-forming subunit of a potassium efflux system that confers protection against electrophiles. Catalyzes K(+)/H(+) antiport. This Erwinia tasmaniensis (strain DSM 17950 / CFBP 7177 / CIP 109463 / NCPPB 4357 / Et1/99) protein is Glutathione-regulated potassium-efflux system protein KefB.